Here is a 322-residue protein sequence, read N- to C-terminus: MIKCGIIGGAGYTAGELIRLLLNHPDAELTFINSSSNAGNKITDVHGGLYGETDLVFTSELPLDSIDLLFFCTAHGDTKKFMENHTVPENVKIIDLSMDYRIEGPEHDFVYGLPELNRRRICNARHIANPGCFATCIQLGVLPLAKHLMLNSDLHVNAITGSTGAGVKPSSTSHFSWRNDNISIYKPFTHQHLAEINQSLSQLQKSYSSRINFIPVRGNFSRGIFATTYIDCKIDLVEIRRIYEEYYDDHSFTFITDKNPDLKQVVNTNKCLIHLQKIDDKLLIISMIDNLLKGASGQAVHNMNLLFGLEETVGLHLKPSAF.

C132 is an active-site residue.

It belongs to the NAGSA dehydrogenase family. Type 1 subfamily.

Its subcellular location is the cytoplasm. The enzyme catalyses N-acetyl-L-glutamate 5-semialdehyde + phosphate + NADP(+) = N-acetyl-L-glutamyl 5-phosphate + NADPH + H(+). Its pathway is amino-acid biosynthesis; L-arginine biosynthesis; N(2)-acetyl-L-ornithine from L-glutamate: step 3/4. Catalyzes the NADPH-dependent reduction of N-acetyl-5-glutamyl phosphate to yield N-acetyl-L-glutamate 5-semialdehyde. The protein is N-acetyl-gamma-glutamyl-phosphate reductase of Parabacteroides distasonis (strain ATCC 8503 / DSM 20701 / CIP 104284 / JCM 5825 / NCTC 11152).